The chain runs to 266 residues: 3-methyl-2-oxobutanoate hydroxymethyltransferase (266 aa).

Residues Asp-46 and Asp-85 each contribute to the Mg(2+) site. 3-methyl-2-oxobutanoate-binding positions include 46–47 (DS), Asp-85, and Lys-115. Glu-117 serves as a coordination point for Mg(2+). The active-site Proton acceptor is Glu-183.

It belongs to the PanB family. Homodecamer; pentamer of dimers. It depends on Mg(2+) as a cofactor.

It localises to the cytoplasm. The catalysed reaction is 3-methyl-2-oxobutanoate + (6R)-5,10-methylene-5,6,7,8-tetrahydrofolate + H2O = 2-dehydropantoate + (6S)-5,6,7,8-tetrahydrofolate. It functions in the pathway cofactor biosynthesis; (R)-pantothenate biosynthesis; (R)-pantoate from 3-methyl-2-oxobutanoate: step 1/2. Functionally, catalyzes the reversible reaction in which hydroxymethyl group from 5,10-methylenetetrahydrofolate is transferred onto alpha-ketoisovalerate to form ketopantoate. The protein is 3-methyl-2-oxobutanoate hydroxymethyltransferase of Trichlorobacter lovleyi (strain ATCC BAA-1151 / DSM 17278 / SZ) (Geobacter lovleyi).